We begin with the raw amino-acid sequence, 132 residues long: Ubiquinol-cytochrome c reductase complex assembly factor 4 (132 aa).

Positions 1–15 (MNRVLCAPAAGAVRA) are cleaved as a signal peptide. The Mitochondrial matrix portion of the chain corresponds to 16-78 (LRLIGWASRS…GKGHQRPWWK (63 aa)). Residues 29-72 (LPGSRDRAHPAAEEEDDPDRPIEFSSSKANPHRWSVGHTMGKGH) form a disordered region. The chain crosses the membrane as a helical span at residues 79–95 (VLPLSCFLVALIIWCYL). Residues 96–132 (REESEADQWLRQVWGEVPEPSDRSEEPETPAAYRART) lie on the Mitochondrial intermembrane side of the membrane. The interval 110–132 (GEVPEPSDRSEEPETPAAYRART) is disordered.

It belongs to the UQCC4 family. In terms of assembly, forms a complex, named COMB/coordinator of mitochondrial CYTB biogenesis, composed of UQCC1, UQCC2, UQCC4, UQCC5 and UQCC6; stabilizes nascent cytochrome b/MT-CYB and promotes its membrane insertion. Forms a complex, named COMA, composed of UQCC1, UQCC2 and UQCC4; activates MT-CYB translation. Forms a complex, named COMC, composed of UQCC1, UQCC2; UQCC3 and UQCC4; mediates MT-CYB hemylation and association with the first nuclear-encoded complex III subunit UQCRQ. Complexes COMA and COMB are bound to the mitochondrion inner membrane by UQCC4.

The protein localises to the mitochondrion inner membrane. In terms of biological role, required for the assembly and stability of the mitochondrial ubiquinol-cytochrome c reductase complex (complex III (CIII) or cytochrome b-c1 complex), a multisubunit transmembrane complex that is part of the mitochondrial electron transport chain (ETC) which drives oxidative phosphorylation. This chain is Ubiquinol-cytochrome c reductase complex assembly factor 4, found in Homo sapiens (Human).